The sequence spans 588 residues: MKLLKDLLVDRKEFEDWKNNLTWARDGTLYLTTFPDISIGQPKYAKDINCNSKNLFHVKEFPLEFENKLDFELAQQNGLLNSQPVCYPRVCKPSPIDDWMAVLSNNGNVSVFKDNKMLTNLDSKGNLSSRTYHCFEWNPIESSIVVGNEDGELQFFSIRKNSENTPEFYFESSIRLSDAGSKDWVTHIVWYEDVLVAALSNNSVFSMTVSASSHQPVSRMIQNASRRKITDLKIVDYKVVLTCPGYVHKIDLKNYSISSLKTGSLENFHIIPLNHEKESTILLMSNKTSYKVLLEDELHVTADNIIAPYLEKKFKKWSTIWNEFNNYETTLVIHGISLSPDGYSIAIVYDMERVAFKYKIASEQSFNIMFAPLYHTWTISERAVGLAWYQTYQIYNQSLPKLPENFSMNKKLLNGNYPISLDFQSYLNALMKSEEMRIIMFLNMTIDKPSILSFLEALYEYAINKKSELTNSFDLACVLSIAAILKREAPIYNGTLLMKNSFLEETFNLESFTADPETVTSTTNNTWKRCGVTLLPILTTHVKICPVSKQRVIDIKRDDLNDYGWFTRGLLERFNEISVYCGTTLEVM.

A sufficient for SPT15-binding region spans residues 399–588 (LPKLPENFSM…VYCGTTLEVM (190 aa)).

As to quaternary structure, heterodimer with TFC6. Component of the TFIIIC complex composed of TFC1, TFC3, TFC4, TFC6, TFC7 and TFC8. The subunits are organized in two globular domains, tauA and tauB, connected by a proteolysis-sensitive and flexible linker. Interacts with SPT15 and directly with TFC6.

The protein localises to the nucleus. Its function is as follows. TFIIIC mediates tRNA and 5S RNA gene activation by binding to intragenic promoter elements. Upstream of the transcription start site, TFIIIC assembles the initiation complex TFIIIB-TFIIIC-tDNA, which is sufficient for RNA polymerase III recruitment and function. Part of the tauB domain of TFIIIC that binds boxB DNA promoter sites of tRNA and similar genes. Plays a role in TFIIB assembly through its interaction with SPT15/TBP. Essential for cell viability. In Saccharomyces cerevisiae (strain ATCC 204508 / S288c) (Baker's yeast), this protein is Transcription factor tau 60 kDa subunit (TFC8).